A 249-amino-acid chain; its full sequence is Inhibitor of growth protein 4 (249 aa).

The stretch at 25–118 forms a coiled coil; the sequence is FQLMRDLDQR…ADLKEKQIES (94 aa). N6-acetyllysine is present on residues K112, K127, and K129. Residues 115 to 163 form a disordered region; it reads QIESSDYDSSSSKGKKKGRTQKEKKAARARSKGKNSDEEAPKAAQKKLK. The short motif at 127–148 is the Bipartite nuclear localization signal element; the sequence is KGKKKGRTQKEKKAARARSKGK. R133 carries the citrulline modification. An N6-acetyllysine mark is found at K146, K148, and K156. R166 carries the post-translational modification Citrulline. The PHD-type zinc-finger motif lies at 196 to 245; that stretch reads PTYCLCHQVSYGEMIGCDNPDCSIEWFHFACVGLTTKPRGKWFCPRCSQE. C199, C201, C212, C217, H223, C226, C239, and C242 together coordinate Zn(2+).

Belongs to the ING family. As to quaternary structure, homodimer. Component of the HBO1 complex composed of KAT7/HBO1, MEAF6, ING4 or ING5, and one scaffold subunit: complexes containing BRPF scaffold (BRPF1, BRD1/BRPF2 or BRPF3) direct KAT7/HBO1 specificity towards H3K14ac, while complexes containing JADE scaffold (JADE1, JADE2 and JADE3) mediate acetylation of histone H4. Interacts with H3K4me3 and to a lesser extent with H3K4me2, the interaction augments KAT7/HBO1 acetylation activity on H3 tails. Interacts with EP300, RELA and TP53; these interactions may be indirect. Interacts with EGLN1. In terms of assembly, interacts with BCL2A1. Citrullination by PADI4 within the nuclear localization signal disrupts the interaction with p53 and increases susceptibility to degradation. In terms of tissue distribution, isoform 2, isoform 3, isoform 4 and isoform 5 are expressed in the mammary gland, ovary, spleen and muscle. As to expression, expressed in the mammary gland, ovary, spleen and muscle.

It is found in the nucleus. In terms of biological role, component of HBO1 complexes, which specifically mediate acetylation of histone H3 at 'Lys-14' (H3K14ac), and have reduced activity toward histone H4. Through chromatin acetylation it may function in DNA replication. May inhibit tumor progression by modulating the transcriptional output of signaling pathways which regulate cell proliferation. Can suppress brain tumor angiogenesis through transcriptional repression of RELA/NFKB3 target genes when complexed with RELA. May also specifically suppress loss of contact inhibition elicited by activated oncogenes such as MYC. Represses hypoxia inducible factor's (HIF) activity by interacting with HIF prolyl hydroxylase 2 (EGLN1). Can enhance apoptosis induced by serum starvation in mammary epithelial cell line HC11. The polypeptide is Inhibitor of growth protein 4 (Ing4) (Mus musculus (Mouse)).